The primary structure comprises 209 residues: Ribosomal RNA large subunit methyltransferase E (209 aa).

S-adenosyl-L-methionine-binding residues include glycine 63, tryptophan 65, aspartate 83, aspartate 99, and aspartate 124. Lysine 164 functions as the Proton acceptor in the catalytic mechanism.

It belongs to the class I-like SAM-binding methyltransferase superfamily. RNA methyltransferase RlmE family.

The protein resides in the cytoplasm. It catalyses the reaction uridine(2552) in 23S rRNA + S-adenosyl-L-methionine = 2'-O-methyluridine(2552) in 23S rRNA + S-adenosyl-L-homocysteine + H(+). Its function is as follows. Specifically methylates the uridine in position 2552 of 23S rRNA at the 2'-O position of the ribose in the fully assembled 50S ribosomal subunit. The protein is Ribosomal RNA large subunit methyltransferase E of Photobacterium profundum (strain SS9).